We begin with the raw amino-acid sequence, 1150 residues long: ATP-dependent helicase/deoxyribonuclease subunit B (1150 aa).

ATP is bound at residue 8-15 (GRSGSGKS). Residues cysteine 789, cysteine 1108, cysteine 1111, and cysteine 1117 each contribute to the [4Fe-4S] cluster site.

The protein belongs to the helicase family. AddB/RexB type 1 subfamily. Heterodimer of AddA and AddB. Mg(2+) serves as cofactor. [4Fe-4S] cluster is required as a cofactor.

Functionally, the heterodimer acts as both an ATP-dependent DNA helicase and an ATP-dependent, dual-direction single-stranded exonuclease. Recognizes the chi site generating a DNA molecule suitable for the initiation of homologous recombination. The AddB subunit has 5' -&gt; 3' nuclease activity but not helicase activity. This Clostridium tetani (strain Massachusetts / E88) protein is ATP-dependent helicase/deoxyribonuclease subunit B.